Here is a 216-residue protein sequence, read N- to C-terminus: Peptide methionine sulfoxide reductase MsrA (216 aa).

Cys-54 is a catalytic residue.

This sequence belongs to the MsrA Met sulfoxide reductase family.

It catalyses the reaction L-methionyl-[protein] + [thioredoxin]-disulfide + H2O = L-methionyl-(S)-S-oxide-[protein] + [thioredoxin]-dithiol. The enzyme catalyses [thioredoxin]-disulfide + L-methionine + H2O = L-methionine (S)-S-oxide + [thioredoxin]-dithiol. Has an important function as a repair enzyme for proteins that have been inactivated by oxidation. Catalyzes the reversible oxidation-reduction of methionine sulfoxide in proteins to methionine. The sequence is that of Peptide methionine sulfoxide reductase MsrA from Xylella fastidiosa (strain M12).